Consider the following 904-residue polypeptide: Phosphoenolpyruvate carboxylase (904 aa).

Residues H151 and K570 contribute to the active site.

Belongs to the PEPCase type 1 family. Requires Mg(2+) as cofactor.

It carries out the reaction oxaloacetate + phosphate = phosphoenolpyruvate + hydrogencarbonate. Its function is as follows. Forms oxaloacetate, a four-carbon dicarboxylic acid source for the tricarboxylic acid cycle. The sequence is that of Phosphoenolpyruvate carboxylase from Xanthomonas campestris pv. campestris (strain 8004).